A 170-amino-acid polypeptide reads, in one-letter code: ATP synthase subunit b (170 aa).

A helical membrane pass occupies residues 11 to 31 (GLNTGDIIFQLIAMLILLALL).

Belongs to the ATPase B chain family. In terms of assembly, F-type ATPases have 2 components, F(1) - the catalytic core - and F(0) - the membrane proton channel. F(1) has five subunits: alpha(3), beta(3), gamma(1), delta(1), epsilon(1). F(0) has three main subunits: a(1), b(2) and c(10-14). The alpha and beta chains form an alternating ring which encloses part of the gamma chain. F(1) is attached to F(0) by a central stalk formed by the gamma and epsilon chains, while a peripheral stalk is formed by the delta and b chains.

It is found in the cell membrane. Its function is as follows. F(1)F(0) ATP synthase produces ATP from ADP in the presence of a proton or sodium gradient. F-type ATPases consist of two structural domains, F(1) containing the extramembraneous catalytic core and F(0) containing the membrane proton channel, linked together by a central stalk and a peripheral stalk. During catalysis, ATP synthesis in the catalytic domain of F(1) is coupled via a rotary mechanism of the central stalk subunits to proton translocation. In terms of biological role, component of the F(0) channel, it forms part of the peripheral stalk, linking F(1) to F(0). The polypeptide is ATP synthase subunit b (Bacillus pumilus (strain SAFR-032)).